Here is a 635-residue protein sequence, read N- to C-terminus: PTS system mannitol-specific EIICBA component (635 aa).

The PTS EIIC type-2 domain occupies 12–342 (FGRFLSNMVM…LFKTSKVKER (331 aa)). The next 6 membrane-spanning stretches (helical) occupy residues 24-45 (IGAFIAWGIITALFIPTGWLPN), 50-70 (KLVGPMITYLLPLLIGYTGGK), 134-155 (SAGIIGMILAILAFLGIGPAVE), 165-185 (VNFMVAHDMLPLASIFVEPAK), 273-292 (VILGGMTGVFTLTILNGGLV), and 313-334 (FANIAAIIAAMAVSFVVSAVLF). In terms of domain architecture, PTS EIIB type-2 spans 378 to 473 (RKIIVACDAG…RLVAAQRHID (96 aa)). The active-site Phosphocysteine intermediate; for EIIB activity is C384. C384 carries the phosphocysteine; by EIIA modification. The PTS EIIA type-2 domain occupies 494–635 (FQLGADNIFL…VDEVLALLNK (142 aa)). H554 serves as the catalytic Tele-phosphohistidine intermediate; for EIIA activity. H554 carries the post-translational modification Phosphohistidine; by HPr.

In terms of assembly, homodimer. In terms of processing, an intramolecular phosphotransfer takes places between His-554 and Cys-384.

Its subcellular location is the cell inner membrane. The enzyme catalyses D-mannitol(out) + N(pros)-phospho-L-histidyl-[protein] = D-mannitol 1-phosphate(in) + L-histidyl-[protein]. In terms of biological role, the phosphoenolpyruvate-dependent sugar phosphotransferase system (sugar PTS), a major carbohydrate active transport system, catalyzes the phosphorylation of incoming sugar substrates concomitantly with their translocation across the cell membrane. This system is involved in D-mannitol transport. In Klebsiella pneumoniae, this protein is PTS system mannitol-specific EIICBA component.